The following is a 290-amino-acid chain: Acetyl-coenzyme A carboxylase carboxyl transferase subunit beta (290 aa).

A CoA carboxyltransferase N-terminal domain is found at 27 to 290 (LWHKCPSCEA…FTHSPSPVSA (264 aa)). Zn(2+)-binding residues include cysteine 31, cysteine 34, cysteine 50, and cysteine 53. Residues 31-53 (CPSCEAVLYRPELEKTLDVCPKC) form a C4-type zinc finger.

It belongs to the AccD/PCCB family. Acetyl-CoA carboxylase is a heterohexamer composed of biotin carboxyl carrier protein (AccB), biotin carboxylase (AccC) and two subunits each of ACCase subunit alpha (AccA) and ACCase subunit beta (AccD). The cofactor is Zn(2+).

Its subcellular location is the cytoplasm. It catalyses the reaction N(6)-carboxybiotinyl-L-lysyl-[protein] + acetyl-CoA = N(6)-biotinyl-L-lysyl-[protein] + malonyl-CoA. Its pathway is lipid metabolism; malonyl-CoA biosynthesis; malonyl-CoA from acetyl-CoA: step 1/1. Functionally, component of the acetyl coenzyme A carboxylase (ACC) complex. Biotin carboxylase (BC) catalyzes the carboxylation of biotin on its carrier protein (BCCP) and then the CO(2) group is transferred by the transcarboxylase to acetyl-CoA to form malonyl-CoA. This is Acetyl-coenzyme A carboxylase carboxyl transferase subunit beta from Pseudomonas paraeruginosa (strain DSM 24068 / PA7) (Pseudomonas aeruginosa (strain PA7)).